Here is a 277-residue protein sequence, read N- to C-terminus: MEMO1 family protein TM_0087 (277 aa).

The protein belongs to the MEMO1 family.

The sequence is that of MEMO1 family protein TM_0087 from Thermotoga maritima (strain ATCC 43589 / DSM 3109 / JCM 10099 / NBRC 100826 / MSB8).